A 490-amino-acid chain; its full sequence is Acetyl-coenzyme A carboxylase carboxyl transferase subunit beta, chloroplastic (490 aa).

One can recognise a CoA carboxyltransferase N-terminal domain in the interval 228–490 (LWVQCENCYG…FKLHAFFPLN (263 aa)). The Zn(2+) site is built by C232, C235, C251, and C254. A C4-type zinc finger spans residues 232–254 (CENCYGLNYKKLLKSKMNICDQC).

It belongs to the AccD/PCCB family. Acetyl-CoA carboxylase is a heterohexamer composed of biotin carboxyl carrier protein, biotin carboxylase and 2 subunits each of ACCase subunit alpha and ACCase plastid-coded subunit beta (accD). The cofactor is Zn(2+).

It localises to the plastid. The protein localises to the chloroplast stroma. It catalyses the reaction N(6)-carboxybiotinyl-L-lysyl-[protein] + acetyl-CoA = N(6)-biotinyl-L-lysyl-[protein] + malonyl-CoA. It functions in the pathway lipid metabolism; malonyl-CoA biosynthesis; malonyl-CoA from acetyl-CoA: step 1/1. Functionally, component of the acetyl coenzyme A carboxylase (ACC) complex. Biotin carboxylase (BC) catalyzes the carboxylation of biotin on its carrier protein (BCCP) and then the CO(2) group is transferred by the transcarboxylase to acetyl-CoA to form malonyl-CoA. The chain is Acetyl-coenzyme A carboxylase carboxyl transferase subunit beta, chloroplastic from Eucalyptus globulus subsp. globulus (Tasmanian blue gum).